A 164-amino-acid chain; its full sequence is Transcription elongation factor GreA (164 aa).

The stretch at 11–76 (EESYDRLKAE…LQELLNNAKV (66 aa)) forms a coiled coil.

This sequence belongs to the GreA/GreB family.

Necessary for efficient RNA polymerase transcription elongation past template-encoded arresting sites. The arresting sites in DNA have the property of trapping a certain fraction of elongating RNA polymerases that pass through, resulting in locked ternary complexes. Cleavage of the nascent transcript by cleavage factors such as GreA or GreB allows the resumption of elongation from the new 3'terminus. GreA releases sequences of 2 to 3 nucleotides. In Mycolicibacterium vanbaalenii (strain DSM 7251 / JCM 13017 / BCRC 16820 / KCTC 9966 / NRRL B-24157 / PYR-1) (Mycobacterium vanbaalenii), this protein is Transcription elongation factor GreA.